Reading from the N-terminus, the 343-residue chain is Heat-inducible transcription repressor HrcA (343 aa).

Belongs to the HrcA family.

Functionally, negative regulator of class I heat shock genes (grpE-dnaK-dnaJ and groELS operons). Prevents heat-shock induction of these operons. The protein is Heat-inducible transcription repressor HrcA of Mycolicibacterium gilvum (strain PYR-GCK) (Mycobacterium gilvum (strain PYR-GCK)).